A 260-amino-acid polypeptide reads, in one-letter code: Ribonuclease HII (260 aa).

The region spanning 73–260 (LHIAGIDEAG…APVQQQLDIV (188 aa)) is the RNase H type-2 domain. A divalent metal cation is bound by residues aspartate 79, glutamate 80, and aspartate 171.

It belongs to the RNase HII family. Requires Mn(2+) as cofactor. It depends on Mg(2+) as a cofactor.

It localises to the cytoplasm. It catalyses the reaction Endonucleolytic cleavage to 5'-phosphomonoester.. Endonuclease that specifically degrades the RNA of RNA-DNA hybrids. The protein is Ribonuclease HII of Desulfitobacterium hafniense (strain DSM 10664 / DCB-2).